The following is a 336-amino-acid chain: Glucokinase (336 aa).

Residue 12 to 17 (ADIGGT) coordinates ATP.

Belongs to the bacterial glucokinase family.

The protein resides in the cytoplasm. It carries out the reaction D-glucose + ATP = D-glucose 6-phosphate + ADP + H(+). This Helicobacter pylori (strain ATCC 700392 / 26695) (Campylobacter pylori) protein is Glucokinase.